The sequence spans 129 residues: Large ribosomal subunit protein bL17 (129 aa).

This sequence belongs to the bacterial ribosomal protein bL17 family. As to quaternary structure, part of the 50S ribosomal subunit. Contacts protein L32.

The polypeptide is Large ribosomal subunit protein bL17 (Buchnera aphidicola subsp. Baizongia pistaciae (strain Bp)).